The chain runs to 356 residues: UDP-N-acetylglucosamine--N-acetylmuramyl-(pentapeptide) pyrophosphoryl-undecaprenol N-acetylglucosamine transferase (356 aa).

UDP-N-acetyl-alpha-D-glucosamine is bound by residues Ser195 and Gln287.

The protein belongs to the glycosyltransferase 28 family. MurG subfamily.

It is found in the cell membrane. The catalysed reaction is Mur2Ac(oyl-L-Ala-gamma-D-Glu-L-Lys-D-Ala-D-Ala)-di-trans,octa-cis-undecaprenyl diphosphate + UDP-N-acetyl-alpha-D-glucosamine = beta-D-GlcNAc-(1-&gt;4)-Mur2Ac(oyl-L-Ala-gamma-D-Glu-L-Lys-D-Ala-D-Ala)-di-trans,octa-cis-undecaprenyl diphosphate + UDP + H(+). The protein operates within cell wall biogenesis; peptidoglycan biosynthesis. Its function is as follows. Cell wall formation. Catalyzes the transfer of a GlcNAc subunit on undecaprenyl-pyrophosphoryl-MurNAc-pentapeptide (lipid intermediate I) to form undecaprenyl-pyrophosphoryl-MurNAc-(pentapeptide)GlcNAc (lipid intermediate II). The chain is UDP-N-acetylglucosamine--N-acetylmuramyl-(pentapeptide) pyrophosphoryl-undecaprenol N-acetylglucosamine transferase from Streptococcus sanguinis (strain SK36).